The chain runs to 236 residues: Small ribosomal subunit protein uS3c (236 aa).

The KH type-2 domain occupies 47 to 127; it reads VRKYVRSSSR…KLNMTLSQVA (81 aa).

Belongs to the universal ribosomal protein uS3 family. As to quaternary structure, part of the 30S ribosomal subunit.

It localises to the plastid. Its subcellular location is the chloroplast. In Zygnema circumcarinatum (Green alga), this protein is Small ribosomal subunit protein uS3c (rps3).